The primary structure comprises 424 residues: Ornithine aminotransferase (424 aa).

K272 carries the N6-(pyridoxal phosphate)lysine modification. Residue K390 forms a Glycyl lysine isopeptide (Lys-Gly) (interchain with G-Cter in ubiquitin) linkage.

It belongs to the class-III pyridoxal-phosphate-dependent aminotransferase family. The cofactor is pyridoxal 5'-phosphate.

The protein resides in the cytoplasm. It carries out the reaction a 2-oxocarboxylate + L-ornithine = L-glutamate 5-semialdehyde + an L-alpha-amino acid. Its pathway is amino-acid biosynthesis; L-proline biosynthesis; L-glutamate 5-semialdehyde from L-ornithine: step 1/1. Its activity is regulated as follows. By arginine and urea. Catalyzes the transamination of ornithine into L-glutamate gamma-semialdehyde, the second step of arginine degradation. The polypeptide is Ornithine aminotransferase (CAR2) (Saccharomyces cerevisiae (strain ATCC 204508 / S288c) (Baker's yeast)).